The following is a 380-amino-acid chain: Tryptophan 2,3-dioxygenase (380 aa).

Substrate is bound by residues 57-61 (FIITH) and arginine 128. Histidine 313 contributes to the heme binding site. Threonine 328 contacts substrate.

Belongs to the tryptophan 2,3-dioxygenase family. In terms of assembly, homotetramer. Dimer of dimers. The cofactor is heme.

It catalyses the reaction L-tryptophan + O2 = N-formyl-L-kynurenine. The protein operates within amino-acid degradation; L-tryptophan degradation via kynurenine pathway; L-kynurenine from L-tryptophan: step 1/2. It participates in pigment biosynthesis; ommochrome biosynthesis. Heme-dependent dioxygenase that catalyzes the oxidative cleavage of the L-tryptophan (L-Trp) pyrrole ring and converts L-tryptophan to N-formyl-L-kynurenine. Catalyzes the oxidative cleavage of the indole moiety. This Drosophila mojavensis (Fruit fly) protein is Tryptophan 2,3-dioxygenase.